A 72-amino-acid polypeptide reads, in one-letter code: MAAKKDLLTQLRGKSDDDLDAYVHENKKALFALRAENLLQNKVVKVHMFSTHKKNIARALTVKQERKGKVHG.

Belongs to the universal ribosomal protein uL29 family.

The sequence is that of Large ribosomal subunit protein uL29 (rpmC) from Chlamydia pneumoniae (Chlamydophila pneumoniae).